Here is a 465-residue protein sequence, read N- to C-terminus: MPYLMRLALVLFCLMALVESRKPRRKRWTGLLETSKPSHLYKKNLDVTKMRPGKPRPLLRVEDHDFTMRPAFGGPAIPVGVDVQVESLDSISEVDMDFTMTLYLRHYWRDERLAFPSSSNKSMTFDGRLVKKIWVPDVFFVHSKRSFIHDTTTDNIMLRVFPDGHVLYSMRITVTAMCNMDFSHFPLDSQTCSLELESYAYTDEDLMLYWKNGDESLKTDEKISLSQFLIQKFHTTSRLAFYSSTGWYNRLYINFTLRRHIFFFLLQTYFPATLMVMLSWVSFWIDHRAVPARVSLGIMTVLTMSTIITGVNASMPRVSYIRAVDIYLWVSFVFVFLSVLEYAAVNYLTTLQEQKERKFREKLPCMCGMLHSRTMMLDGSYSESEANSLAGYPRSHILPEEERPDNIVVHLALNSELTSSRKKGLLKGQMGLYIFQNTHAIDKYSRLIFPAFYIVFNLIYWSVFS.

Residues 1–20 form the signal peptide; that stretch reads MPYLMRLALVLFCLMALVES. Over 21–260 the chain is Extracellular; the sequence is RKPRRKRWTG…LYINFTLRRH (240 aa). Arginine 105 lines the 4-aminobutanoate pocket. The N-linked (GlcNAc...) asparagine glycan is linked to asparagine 120. 4-aminobutanoate is bound at residue serine 169. Residues cysteine 178 and cysteine 192 are joined by a disulfide bond. Glutamate 197 is a binding site for 4-aminobutanoate. The N-linked (GlcNAc...) asparagine glycan is linked to asparagine 254. A helical membrane pass occupies residues 261 to 281; that stretch reads IFFFLLQTYFPATLMVMLSWV. Residues 282-293 lie on the Cytoplasmic side of the membrane; it reads SFWIDHRAVPAR. A helical transmembrane segment spans residues 294–314; it reads VSLGIMTVLTMSTIITGVNAS. Residues 315–325 are Extracellular-facing; the sequence is MPRVSYIRAVD. The chain crosses the membrane as a helical span at residues 326-346; sequence IYLWVSFVFVFLSVLEYAAVN. Topologically, residues 347–443 are cytoplasmic; it reads YLTTLQEQKE…IFQNTHAIDK (97 aa). The helical transmembrane segment at 444–464 threads the bilayer; that stretch reads YSRLIFPAFYIVFNLIYWSVF. A topological domain (extracellular) is located at residue serine 465.

The protein belongs to the ligand-gated ion channel (TC 1.A.9) family. Gamma-aminobutyric acid receptor (TC 1.A.9.5) subfamily. GABRR2 sub-subfamily. Three rho subunits (rho-1/GBRR1, rho-2/GBRR2 and rho-3/GBRR3) coassemble either to form functional homopentamers or heteropentamers. Rho-2 is unable to form a functional homopentamer. Interacts with SQSTM1. As to expression, expressed in the cerebellum.

Its subcellular location is the postsynaptic cell membrane. The protein resides in the cell membrane. The enzyme catalyses chloride(in) = chloride(out). In terms of biological role, rho subunit of the pentameric ligand-gated chloride channels responsible for mediating the effects of gamma-aminobutyric acid (GABA), the major inhibitory neurotransmitter in the brain. Rho-containing GABA-gated chloride channels are a subclass of GABA(A) receptors (GABAARs) entirely composed of rho subunits, where GABA molecules bind at the rho intersubunit interfaces. When activated by GABA, rho-GABAARs selectively allow the flow of chloride anions across the cell membrane down their electrochemical gradient. Rho-2 GABAARs may contribute to the regulation of glial development in the cerebellum by controlling extrasynaptic transmission. Rho-2 GABAARs are also involved in neuronal tonic (extrasynaptic) and phasic (synaptic) transmission in the Purkinje neurons of the cerebellum. Rho-2 GABAARs expressed in retina may play a role in retinal neurotransmission. This Mus musculus (Mouse) protein is Gamma-aminobutyric acid receptor subunit rho-2.